Here is a 645-residue protein sequence, read N- to C-terminus: Threonine--tRNA ligase (645 aa).

Residues 1 to 63 enclose the TGS domain; sequence MDQIKIKFPD…ESDGDIEIVT (63 aa). The interval 242–540 is catalytic; sequence DHRKIGKELE…LTEETKGAFP (299 aa). C336, H387, and H517 together coordinate Zn(2+).

Belongs to the class-II aminoacyl-tRNA synthetase family. In terms of assembly, homodimer. Zn(2+) is required as a cofactor.

The protein resides in the cytoplasm. The enzyme catalyses tRNA(Thr) + L-threonine + ATP = L-threonyl-tRNA(Thr) + AMP + diphosphate + H(+). Its function is as follows. Catalyzes the attachment of threonine to tRNA(Thr) in a two-step reaction: L-threonine is first activated by ATP to form Thr-AMP and then transferred to the acceptor end of tRNA(Thr). Also edits incorrectly charged L-seryl-tRNA(Thr). The protein is Threonine--tRNA ligase of Staphylococcus saprophyticus subsp. saprophyticus (strain ATCC 15305 / DSM 20229 / NCIMB 8711 / NCTC 7292 / S-41).